The primary structure comprises 655 residues: tRNA 5-methylaminomethyl-2-thiouridine biosynthesis bifunctional protein MnmC (655 aa).

Positions 1 to 236 (MTDPLVPAVL…KRAMLVGRFA (236 aa)) are tRNA (mnm(5)s(2)U34)-methyltransferase. Residues 260-655 (IGTGLAGCAA…LRALRQGTAS (396 aa)) are FAD-dependent cmnm(5)s(2)U34 oxidoreductase.

In the N-terminal section; belongs to the methyltransferase superfamily. tRNA (mnm(5)s(2)U34)-methyltransferase family. This sequence in the C-terminal section; belongs to the DAO family. It depends on FAD as a cofactor.

Its subcellular location is the cytoplasm. The enzyme catalyses 5-aminomethyl-2-thiouridine(34) in tRNA + S-adenosyl-L-methionine = 5-methylaminomethyl-2-thiouridine(34) in tRNA + S-adenosyl-L-homocysteine + H(+). Catalyzes the last two steps in the biosynthesis of 5-methylaminomethyl-2-thiouridine (mnm(5)s(2)U) at the wobble position (U34) in tRNA. Catalyzes the FAD-dependent demodification of cmnm(5)s(2)U34 to nm(5)s(2)U34, followed by the transfer of a methyl group from S-adenosyl-L-methionine to nm(5)s(2)U34, to form mnm(5)s(2)U34. In Paraburkholderia phymatum (strain DSM 17167 / CIP 108236 / LMG 21445 / STM815) (Burkholderia phymatum), this protein is tRNA 5-methylaminomethyl-2-thiouridine biosynthesis bifunctional protein MnmC.